The primary structure comprises 115 residues: NADH-ubiquinone oxidoreductase chain 3 (115 aa).

3 helical membrane passes run 3-23, 55-75, and 84-104; these read LMLTLLTNTLLASLLVLIAFW, FFLVAITFLLFDLEIALLLPL, and LNTMLIMALILISLLAISLAY.

Belongs to the complex I subunit 3 family. Core subunit of respiratory chain NADH dehydrogenase (Complex I) which is composed of 45 different subunits. Interacts with TMEM186. Interacts with TMEM242.

It localises to the mitochondrion inner membrane. The enzyme catalyses a ubiquinone + NADH + 5 H(+)(in) = a ubiquinol + NAD(+) + 4 H(+)(out). Core subunit of the mitochondrial membrane respiratory chain NADH dehydrogenase (Complex I) which catalyzes electron transfer from NADH through the respiratory chain, using ubiquinone as an electron acceptor. Essential for the catalytic activity of complex I. The protein is NADH-ubiquinone oxidoreductase chain 3 of Equus asinus (Donkey).